We begin with the raw amino-acid sequence, 143 residues long: Nucleoside diphosphate kinase (143 aa).

Positions 11, 59, 87, 93, 104, and 114 each coordinate ATP. H117 serves as the catalytic Pros-phosphohistidine intermediate.

Belongs to the NDK family. In terms of assembly, homotetramer. Mg(2+) is required as a cofactor.

It localises to the cytoplasm. It carries out the reaction a 2'-deoxyribonucleoside 5'-diphosphate + ATP = a 2'-deoxyribonucleoside 5'-triphosphate + ADP. The catalysed reaction is a ribonucleoside 5'-diphosphate + ATP = a ribonucleoside 5'-triphosphate + ADP. Functionally, major role in the synthesis of nucleoside triphosphates other than ATP. The ATP gamma phosphate is transferred to the NDP beta phosphate via a ping-pong mechanism, using a phosphorylated active-site intermediate. This chain is Nucleoside diphosphate kinase, found in Idiomarina loihiensis (strain ATCC BAA-735 / DSM 15497 / L2-TR).